We begin with the raw amino-acid sequence, 492 residues long: Coagulation factor X (492 aa).

The signal sequence occupies residues M1–S23. A propeptide spanning residues V24 to R40 is cleaved from the precursor. The Gla domain occupies A41 to K85. 4-carboxyglutamate occurs at positions 46, 47, 54, 56, 59, 60, 65, 66, 69, 72, 75, and 79. A disulfide bridge connects residues C57 and C62. The EGF-like 1; calcium-binding domain occupies D86–E122. 11 disulfide bridges follow: C90–C101, C95–C110, C112–C121, C129–C140, C136–C149, C151–C164, C172–C341, C240–C245, C260–C276, C389–C403, and C414–C442. A (3R)-3-hydroxyaspartate modification is found at D103. The 41-residue stretch at T125–V165 folds into the EGF-like 2 domain. Residues W183–R233 constitute a propeptide, activation peptide. Y200 bears the Sulfotyrosine mark. T208 is a glycosylation site (O-linked (GalNAc...) threonine). N218 carries an N-linked (GlcNAc...) asparagine glycan. The 233-residue stretch at I234–K466 folds into the Peptidase S1 domain. Catalysis depends on charge relay system residues H275 and D321. The active-site Charge relay system is S418. The segment at A472–L492 is disordered. Residues G476 to L492 constitute a propeptide, may be removed but is not necessary for activation. Residue T485 is glycosylated (O-linked (GalNAc...) threonine).

Belongs to the peptidase S1 family. The two chains are formed from a single-chain precursor by the excision of two Arg residues and are held together by 1 or more disulfide bonds. Forms a heterodimer with SERPINA5. Interacts (activated) with guianensin, an anticoagulant protein from Simulium guianense saliva. Interacts (activated) with simukunin, an anticoagulant protein from Simulium vittatum saliva. In terms of processing, the vitamin K-dependent, enzymatic carboxylation of some glutamate residues allows the modified protein to bind calcium. N- and O-glycosylated. Post-translationally, proteolytically cleaved and activated by cathepsin CTSG. The activation peptide is cleaved by factor IXa (in the intrinsic pathway), or by factor VIIa (in the extrinsic pathway). In terms of processing, the iron and 2-oxoglutarate dependent 3-hydroxylation of aspartate and asparagine is (R) stereospecific within EGF domains.

It localises to the secreted. It carries out the reaction Selective cleavage of Arg-|-Thr and then Arg-|-Ile bonds in prothrombin to form thrombin.. With respect to regulation, inhibited by SERPINA5. In terms of biological role, factor Xa is a vitamin K-dependent glycoprotein that converts prothrombin to thrombin in the presence of factor Va, calcium and phospholipid during blood clotting. Factor Xa activates pro-inflammatory and pro-fibrotic signaling pathways in a protease-activated receptor (PAR)-dependent manner. This Bos taurus (Bovine) protein is Coagulation factor X (F10).